A 357-amino-acid chain; its full sequence is Uroporphyrinogen decarboxylase (357 aa).

Residues 27-31 (RQAGR), Asp77, Tyr154, Ser209, and His330 contribute to the substrate site.

Belongs to the uroporphyrinogen decarboxylase family. Homodimer.

It localises to the cytoplasm. It carries out the reaction uroporphyrinogen III + 4 H(+) = coproporphyrinogen III + 4 CO2. It functions in the pathway porphyrin-containing compound metabolism; protoporphyrin-IX biosynthesis; coproporphyrinogen-III from 5-aminolevulinate: step 4/4. Its function is as follows. Catalyzes the decarboxylation of four acetate groups of uroporphyrinogen-III to yield coproporphyrinogen-III. The chain is Uroporphyrinogen decarboxylase from Acinetobacter baumannii (strain ACICU).